The sequence spans 384 residues: Succinate--CoA ligase [ADP-forming] subunit beta (384 aa).

The 234-residue stretch at Lys-9–Glu-242 folds into the ATP-grasp domain. ATP contacts are provided by residues Lys-45, Gly-52–Gly-54, Glu-98, Leu-101, and Glu-106. 2 residues coordinate Mg(2+): Asn-197 and Asp-211. Substrate contacts are provided by residues Asn-262 and Gly-319–Leu-321.

This sequence belongs to the succinate/malate CoA ligase beta subunit family. As to quaternary structure, heterotetramer of two alpha and two beta subunits. Mg(2+) is required as a cofactor.

The catalysed reaction is succinate + ATP + CoA = succinyl-CoA + ADP + phosphate. The enzyme catalyses GTP + succinate + CoA = succinyl-CoA + GDP + phosphate. Its pathway is carbohydrate metabolism; tricarboxylic acid cycle; succinate from succinyl-CoA (ligase route): step 1/1. In terms of biological role, succinyl-CoA synthetase functions in the citric acid cycle (TCA), coupling the hydrolysis of succinyl-CoA to the synthesis of either ATP or GTP and thus represents the only step of substrate-level phosphorylation in the TCA. The beta subunit provides nucleotide specificity of the enzyme and binds the substrate succinate, while the binding sites for coenzyme A and phosphate are found in the alpha subunit. This is Succinate--CoA ligase [ADP-forming] subunit beta from Solibacter usitatus (strain Ellin6076).